The primary structure comprises 385 residues: 2-oxoglutarate-dependent dioxygenase AFUA_1G01000 (385 aa).

Positions 203-327 (PSDDFLRLLR…RYSVLVGTRP (125 aa)) constitute a Fe2OG dioxygenase domain. 3 residues coordinate Fe cation: His230, Asp232, and His304. A 2-oxoglutarate-binding site is contributed by Arg318.

This sequence belongs to the iron/ascorbate-dependent oxidoreductase family. The cofactor is Fe(2+).

2-oxoglutarate-dependent dioxygenase; part of the gene cluster that mediates the biosynthesis of fumigermin that inhibits germination of spores of the inducing S.rapamycinicus, and thus helps the fungus to defend resources in the shared habitat against a bacterial competitor. The partially reducing polyketide synthase fngA alone is sufficient for the production of fumigermin. FgnA catalyzes the condensation of 3 malonyl-CoA units to an acetyl-CoA starter, and 3 methylations to yield fumigermin. It is remarkable that the five cluster genes including fgnA are conserved in distantly related fungi, supporting the assumption of a fumigermin cluster; it is thus possible that originally all five genes were functional, but that the genes encoding tailoring enzymes became inactive from mutations, similar to the case of the fgnA gene in strains A1163 and Af293. This Aspergillus fumigatus (strain ATCC MYA-4609 / CBS 101355 / FGSC A1100 / Af293) (Neosartorya fumigata) protein is 2-oxoglutarate-dependent dioxygenase AFUA_1G01000.